Here is a 176-residue protein sequence, read N- to C-terminus: Large ribosomal subunit protein uL6 (176 aa).

This sequence belongs to the universal ribosomal protein uL6 family. As to quaternary structure, part of the 50S ribosomal subunit.

Its function is as follows. This protein binds to the 23S rRNA, and is important in its secondary structure. It is located near the subunit interface in the base of the L7/L12 stalk, and near the tRNA binding site of the peptidyltransferase center. In Lactobacillus gasseri (strain ATCC 33323 / DSM 20243 / BCRC 14619 / CIP 102991 / JCM 1131 / KCTC 3163 / NCIMB 11718 / NCTC 13722 / AM63), this protein is Large ribosomal subunit protein uL6.